Consider the following 316-residue polypeptide: ATP synthase gamma chain (316 aa).

It belongs to the ATPase gamma chain family. As to quaternary structure, F-type ATPases have 2 components, CF(1) - the catalytic core - and CF(0) - the membrane proton channel. CF(1) has five subunits: alpha(3), beta(3), gamma(1), delta(1), epsilon(1). CF(0) has three main subunits: a, b and c.

It localises to the cellular thylakoid membrane. Functionally, produces ATP from ADP in the presence of a proton gradient across the membrane. The gamma chain is believed to be important in regulating ATPase activity and the flow of protons through the CF(0) complex. The sequence is that of ATP synthase gamma chain from Synechococcus sp. (strain CC9605).